Here is a 289-residue protein sequence, read N- to C-terminus: 4-diphosphocytidyl-2-C-methyl-D-erythritol kinase (289 aa).

The active site involves Lys-13. 101–111 (PMGGGLGGGSS) contacts ATP. Asp-143 is a catalytic residue.

It belongs to the GHMP kinase family. IspE subfamily.

The enzyme catalyses 4-CDP-2-C-methyl-D-erythritol + ATP = 4-CDP-2-C-methyl-D-erythritol 2-phosphate + ADP + H(+). It functions in the pathway isoprenoid biosynthesis; isopentenyl diphosphate biosynthesis via DXP pathway; isopentenyl diphosphate from 1-deoxy-D-xylulose 5-phosphate: step 3/6. Functionally, catalyzes the phosphorylation of the position 2 hydroxy group of 4-diphosphocytidyl-2C-methyl-D-erythritol. This is 4-diphosphocytidyl-2-C-methyl-D-erythritol kinase from Janthinobacterium sp. (strain Marseille) (Minibacterium massiliensis).